The primary structure comprises 702 residues: Phosphoribosylformylglycinamidine synthase subunit PurL (702 aa).

His36 is a catalytic residue. Tyr39 and Lys80 together coordinate ATP. Glu82 contributes to the Mg(2+) binding site. Substrate is bound by residues 83–86 (SHNH) and Arg105. Residue His84 is the Proton acceptor of the active site. Residue Asp106 participates in Mg(2+) binding. Gln225 contributes to the substrate binding site. Residue Asp251 participates in Mg(2+) binding. Residue 293–295 (ETQ) coordinates substrate. The ATP site is built by Asp468 and Gly505. Residue Ser508 coordinates substrate.

It belongs to the FGAMS family. In terms of assembly, monomer. Part of the FGAM synthase complex composed of 1 PurL, 1 PurQ and 2 PurS subunits.

The protein resides in the cytoplasm. The enzyme catalyses N(2)-formyl-N(1)-(5-phospho-beta-D-ribosyl)glycinamide + L-glutamine + ATP + H2O = 2-formamido-N(1)-(5-O-phospho-beta-D-ribosyl)acetamidine + L-glutamate + ADP + phosphate + H(+). It functions in the pathway purine metabolism; IMP biosynthesis via de novo pathway; 5-amino-1-(5-phospho-D-ribosyl)imidazole from N(2)-formyl-N(1)-(5-phospho-D-ribosyl)glycinamide: step 1/2. Part of the phosphoribosylformylglycinamidine synthase complex involved in the purines biosynthetic pathway. Catalyzes the ATP-dependent conversion of formylglycinamide ribonucleotide (FGAR) and glutamine to yield formylglycinamidine ribonucleotide (FGAM) and glutamate. The FGAM synthase complex is composed of three subunits. PurQ produces an ammonia molecule by converting glutamine to glutamate. PurL transfers the ammonia molecule to FGAR to form FGAM in an ATP-dependent manner. PurS interacts with PurQ and PurL and is thought to assist in the transfer of the ammonia molecule from PurQ to PurL. The polypeptide is Phosphoribosylformylglycinamidine synthase subunit PurL (Metallosphaera sedula (strain ATCC 51363 / DSM 5348 / JCM 9185 / NBRC 15509 / TH2)).